A 98-amino-acid polypeptide reads, in one-letter code: NADH-ubiquinone oxidoreductase chain 4L (98 aa).

Transmembrane regions (helical) follow at residues 1–21, 29–49, and 61–81; these read MTLI…GLLM, ALLC…LTIL, and IILL…LVMV.

This sequence belongs to the complex I subunit 4L family. In terms of assembly, core subunit of respiratory chain NADH dehydrogenase (Complex I) which is composed of 45 different subunits.

The protein localises to the mitochondrion inner membrane. The catalysed reaction is a ubiquinone + NADH + 5 H(+)(in) = a ubiquinol + NAD(+) + 4 H(+)(out). Core subunit of the mitochondrial membrane respiratory chain NADH dehydrogenase (Complex I) which catalyzes electron transfer from NADH through the respiratory chain, using ubiquinone as an electron acceptor. Part of the enzyme membrane arm which is embedded in the lipid bilayer and involved in proton translocation. This is NADH-ubiquinone oxidoreductase chain 4L (MT-ND4L) from Balaenoptera omurai (Omura's baleen whale).